Reading from the N-terminus, the 628-residue chain is Putative pentatricopeptide repeat-containing protein At3g13770, mitochondrial (628 aa).

The transit peptide at 1-19 (MFNLMRLIHRSFSSSPTNY) directs the protein to the mitochondrion. PPR repeat units follow at residues 51–85 (GFHG…RYLP), 86–116 (ATYL…MPEK), 117–151 (NVVS…DGKP), 152–186 (NEFT…NYDS), 187–217 (HIFV…LPER), 218–252 (DVVS…GMSP), 253–287 (NYVT…ELPF), 288–318 (YAVL…MPER), 319–353 (TAIS…KRVK), 355–389 (DAVT…EYGT), and 392–422 (GTEH…MPSK). The tract at residues 427 to 502 (VLGSLLGACR…EPGRSWIQHE (76 aa)) is type E motif. A type E(+) motif region spans residues 503-533 (QTLHYFHANDRTHPRREEVLAKMKEISIKMK). Residues 534–628 (QAGYVPDLSC…DGICSCGDYW (95 aa)) form a type DYW motif region.

This sequence belongs to the PPR family. PCMP-H subfamily.

The protein localises to the mitochondrion. This is Putative pentatricopeptide repeat-containing protein At3g13770, mitochondrial (PCMP-H85) from Arabidopsis thaliana (Mouse-ear cress).